We begin with the raw amino-acid sequence, 423 residues long: Lysosomal acid phosphatase (423 aa).

Positions 1-30 are cleaved as a signal peptide; it reads MAGKRSGWSRAALLQLLLGVNLVVMPPTRA. Topologically, residues 31–380 are lumenal; the sequence is RSLRFVTLLY…QLASGPADTE (350 aa). His-42 (nucleophile) is an active-site residue. Asn-92, Asn-133, Asn-167, Asn-177, Asn-191, and Asn-267 each carry an N-linked (GlcNAc...) asparagine glycan. Disulfide bonds link Cys-159–Cys-370, Cys-212–Cys-310, and Cys-345–Cys-349. The active-site Proton donor is the Asp-287. Asn-322 and Asn-331 each carry an N-linked (GlcNAc...) asparagine glycan. A helical membrane pass occupies residues 381–401; that stretch reads VIVALAVCGSILFLLIVLLLT. At 402 to 423 the chain is on the cytoplasmic side; that stretch reads VLFRMQAQPPGYRHVADGEDHA.

It belongs to the histidine acid phosphatase family. The membrane-bound form is converted to the soluble form by sequential proteolytic processing. First, the C-terminal cytoplasmic tail is removed. Cleavage by a lysosomal protease releases the soluble form in the lysosome lumen. Post-translationally, N-glycosylated. The intermediates formed during enzymatic deglycosylation suggest that all eight predicted N-glycosylation sites are used.

It localises to the lysosome membrane. Its subcellular location is the lysosome lumen. It catalyses the reaction a phosphate monoester + H2O = an alcohol + phosphate. This chain is Lysosomal acid phosphatase (ACP2), found in Homo sapiens (Human).